The primary structure comprises 328 residues: 3,4-dihydroxyphenylacetaldehyde synthase 2 (328 aa).

Residue N111 is part of the active site. Residue K222 is modified to N6-(pyridoxal phosphate)lysine.

It belongs to the group II decarboxylase family. Requires pyridoxal 5'-phosphate as cofactor.

The enzyme catalyses L-dopa + O2 + H2O + H(+) = 3,4-dihydroxyphenylacetaldehyde + H2O2 + NH4(+) + CO2. In terms of biological role, catalyzes the decarboxylation-oxidative deamination of L-3,4-dihydroxyphenylalanine (L-DOPA) to 3,4-dihydroxylphenylacetaldehyde (DHPAA). Involved in cuticle development. Probably responsible for the protein cross-linking during the development of flexible cuticles. This Drosophila simulans (Fruit fly) protein is 3,4-dihydroxyphenylacetaldehyde synthase 2 (amd).